Here is a 190-residue protein sequence, read N- to C-terminus: Cysteine dioxygenase (190 aa).

Fe cation contacts are provided by H78, H80, and H132. Positions 85–149 (CFVKILDGEL…SNGAVSLHLY (65 aa)) form a cross-link, 3'-(S-cysteinyl)-tyrosine (Cys-Tyr).

The protein belongs to the cysteine dioxygenase family. It depends on Fe cation as a cofactor. Post-translationally, the thioether cross-link between Cys-85 and Tyr-149 plays a structural role through stabilizing the Fe(2+) ion, and prevents the production of highly damaging free hydroxyl radicals by holding the oxygen radical via hydroxyl hydrogen.

It catalyses the reaction L-cysteine + O2 = 3-sulfino-L-alanine + H(+). It participates in organosulfur biosynthesis; taurine biosynthesis; hypotaurine from L-cysteine: step 1/2. This Caenorhabditis briggsae protein is Cysteine dioxygenase (cdo-1).